The following is a 313-amino-acid chain: Catalase-related peroxidase (313 aa).

Residue H28 is part of the active site. A heme-binding site is contributed by Y294.

Belongs to the catalase family. As to quaternary structure, monomer. The cofactor is heme.

In terms of biological role, has an organic peroxide-dependent peroxidase activity. Exhibits strong peroxidase activity using organic hydroperoxides as cosubstrates, weak peroxidase activity using hydrogen peroxide and negligible catalase activity. May have a role in elimination of reactive oxygen species, in particular by deactivating hydroperoxides. The sequence is that of Catalase-related peroxidase from Mycolicibacterium paratuberculosis (strain ATCC BAA-968 / K-10) (Mycobacterium paratuberculosis).